The sequence spans 185 residues: Cytidylate kinase (185 aa).

8–16 (GPPGSGKTT) is a binding site for ATP.

This sequence belongs to the cytidylate kinase family. Type 2 subfamily.

The protein localises to the cytoplasm. It catalyses the reaction CMP + ATP = CDP + ADP. The enzyme catalyses dCMP + ATP = dCDP + ADP. The polypeptide is Cytidylate kinase (Desulfurococcus amylolyticus (strain DSM 18924 / JCM 16383 / VKM B-2413 / 1221n) (Desulfurococcus kamchatkensis)).